The sequence spans 251 residues: Vacuolar protein sorting-associated protein 37D (251 aa).

Residues 93-182 enclose the VPS37 C-terminal domain; the sequence is AENCADKLQR…RRRERSAQPA (90 aa). Positions 174 to 251 are disordered; sequence RRERSAQPAP…RPSQPEPPHR (78 aa). Residues 221–251 show a composition bias toward pro residues; sequence PVPPLKGSPGCPLGPAPLLSPRPSQPEPPHR.

Belongs to the VPS37 family. In terms of assembly, component of the ESCRT-I complex (endosomal sorting complex required for transport I) which consists of TSG101, VPS28, a VPS37 protein (VPS37A to -D) and MVB12A or MVB12B in a 1:1:1:1 stoichiometry. Interacts with TSG101 and MVB12A. Component of the ESCRT-I complex (endosomal sorting complex required for transport I) which consists of TSG101, VPS28, a VPS37 protein (VPS37A to -D) and UBAP1 in a 1:1:1:1 stoichiometry.

It is found in the late endosome membrane. Its function is as follows. Component of the ESCRT-I complex, a regulator of vesicular trafficking process. Required for the sorting of endocytic ubiquitinated cargos into multivesicular bodies. May be involved in cell growth and differentiation. This chain is Vacuolar protein sorting-associated protein 37D, found in Homo sapiens (Human).